A 614-amino-acid chain; its full sequence is tRNA uridine 5-carboxymethylaminomethyl modification enzyme MnmG (614 aa).

10–15 (GAGHAG) serves as a coordination point for FAD. 271–285 (GPRYCPSIEDKIVKF) contributes to the NAD(+) binding site.

The protein belongs to the MnmG family. As to quaternary structure, homodimer. Heterotetramer of two MnmE and two MnmG subunits. Requires FAD as cofactor.

The protein localises to the cytoplasm. In terms of biological role, NAD-binding protein involved in the addition of a carboxymethylaminomethyl (cmnm) group at the wobble position (U34) of certain tRNAs, forming tRNA-cmnm(5)s(2)U34. The polypeptide is tRNA uridine 5-carboxymethylaminomethyl modification enzyme MnmG (Ureaplasma urealyticum serovar 10 (strain ATCC 33699 / Western)).